A 287-amino-acid polypeptide reads, in one-letter code: Large ribosomal subunit protein uL2 (287 aa).

The segment at Leu-214–Ala-287 is disordered. The span at Gln-271–Ala-287 shows a compositional bias: basic residues.

This sequence belongs to the universal ribosomal protein uL2 family. As to quaternary structure, part of the 50S ribosomal subunit. Forms a bridge to the 30S subunit in the 70S ribosome.

In terms of biological role, one of the primary rRNA binding proteins. Required for association of the 30S and 50S subunits to form the 70S ribosome, for tRNA binding and peptide bond formation. It has been suggested to have peptidyltransferase activity; this is somewhat controversial. Makes several contacts with the 16S rRNA in the 70S ribosome. The polypeptide is Large ribosomal subunit protein uL2 (Synechococcus elongatus (strain ATCC 33912 / PCC 7942 / FACHB-805) (Anacystis nidulans R2)).